Consider the following 339-residue polypeptide: Tetraacyldisaccharide 4'-kinase (339 aa).

61–68 (TAGGTGKT) is a binding site for ATP.

Belongs to the LpxK family.

It carries out the reaction a lipid A disaccharide + ATP = a lipid IVA + ADP + H(+). It participates in glycolipid biosynthesis; lipid IV(A) biosynthesis; lipid IV(A) from (3R)-3-hydroxytetradecanoyl-[acyl-carrier-protein] and UDP-N-acetyl-alpha-D-glucosamine: step 6/6. Functionally, transfers the gamma-phosphate of ATP to the 4'-position of a tetraacyldisaccharide 1-phosphate intermediate (termed DS-1-P) to form tetraacyldisaccharide 1,4'-bis-phosphate (lipid IVA). In Stenotrophomonas maltophilia (strain R551-3), this protein is Tetraacyldisaccharide 4'-kinase.